Consider the following 117-residue polypeptide: Non-specific lipid-transfer protein B (117 aa).

The signal sequence occupies residues 1–25 (MAGLVKLSCLVLACMIVAGPIATNA). Disulfide bonds link Cys29–Cys76, Cys39–Cys53, Cys54–Cys99, and Cys74–Cys113.

This sequence belongs to the plant LTP family.

Plant non-specific lipid-transfer proteins transfer phospholipids as well as galactolipids across membranes. May play a role in wax or cutin deposition in the cell walls of expanding epidermal cells and certain secretory tissues. The protein is Non-specific lipid-transfer protein B (WAX9B) of Brassica oleracea var. italica (Broccoli).